Consider the following 380-residue polypeptide: MYLRSLHLRHFRNYRDQEITFDAPKTILVGENAQGKTNLLEAVELLATLRSRRASRDRELVYQEERQAQIAATVERLGVAHELVMELRSSGRRSLKVDGQVLRRQADFLGQVNAVVFSSLDLELVRGGPEARRNWLDGVLLQLEPAYLGLVEQYRQILRQRNALLKQDPAAAGDKFSQMDFWDAQLATTGSRIMRRRARLLQRLEPLAAHWHRVISGGRETLTLTYRPQVPLPDPQASPEVIQAQFLAEIRAKAAAEHSLGSSLVGPHRDEVELCINGVAARAYGSQGQQRTLVLALKLAELELIEQVVRDPPLLLLDDVLAELDLHRQNQLLEAIQERVQTLVTTTHLGSFDAGWLKAAQILQVQGGQLFPSKTGDGIP.

Residue 30 to 37 coordinates ATP; sequence GENAQGKT.

This sequence belongs to the RecF family.

Its subcellular location is the cytoplasm. Functionally, the RecF protein is involved in DNA metabolism; it is required for DNA replication and normal SOS inducibility. RecF binds preferentially to single-stranded, linear DNA. It also seems to bind ATP. The chain is DNA replication and repair protein RecF from Synechococcus sp. (strain JA-2-3B'a(2-13)) (Cyanobacteria bacterium Yellowstone B-Prime).